The following is a 594-amino-acid chain: Type IV inositol polyphosphate 5-phosphatase 7 (594 aa).

Residues Phe-246–Phe-300 form a disordered region. Residues Arg-251 to Asp-261 show a composition bias toward basic and acidic residues. A compositionally biased stretch (low complexity) spans Tyr-262–Ser-279. 2 catalytic regions span residues Asp-435–Ser-450 and Lys-515–Glu-530.

The protein belongs to the inositol polyphosphate 5-phosphatase family. Broadly expressed in emerging organs. Mostly localized in procambium of growing organs. Restricted to vascular differentiating cells of young organs.

The protein localises to the nucleus. The protein resides in the cell membrane. It carries out the reaction a 1,2-diacyl-sn-glycero-3-phospho-(1D-myo-inositol-4,5-bisphosphate) + H2O = a 1,2-diacyl-sn-glycero-3-phospho-(1D-myo-inositol 4-phosphate) + phosphate. It catalyses the reaction a 1,2-diacyl-sn-glycero-3-phospho-(1D-myo-inositol-3,4,5-trisphosphate) + H2O = a 1,2-diacyl-sn-glycero-3-phospho-(1D-myo-inositol-3,4-bisphosphate) + phosphate. In terms of biological role, has phosphatase activity toward PtdIns(4,5)P2 and at a lower extent toward PtdIns(3,4,5)P3 but not toward Ins(1,4,5)P3. Acts redundantly with CVP2 for maintaining vascular continuity. Regulates phosphoinositide-dependent VAN3 localization. Functions in salt stress response by regulating reactive oxygen species (ROS) production and stress-responsive genes expression. This is Type IV inositol polyphosphate 5-phosphatase 7 from Arabidopsis thaliana (Mouse-ear cress).